Here is a 393-residue protein sequence, read N- to C-terminus: CCA-adding enzyme (393 aa).

Residues G27 and R30 each coordinate ATP. Positions 27 and 30 each coordinate CTP. D40 and D42 together coordinate Mg(2+). 5 residues coordinate ATP: R111, D154, R157, R160, and R163. R111, D154, R157, R160, and R163 together coordinate CTP.

It belongs to the tRNA nucleotidyltransferase/poly(A) polymerase family. Bacterial CCA-adding enzyme type 3 subfamily. Homodimer. Requires Mg(2+) as cofactor.

It carries out the reaction a tRNA precursor + 2 CTP + ATP = a tRNA with a 3' CCA end + 3 diphosphate. The enzyme catalyses a tRNA with a 3' CCA end + 2 CTP + ATP = a tRNA with a 3' CCACCA end + 3 diphosphate. Its function is as follows. Catalyzes the addition and repair of the essential 3'-terminal CCA sequence in tRNAs without using a nucleic acid template. Adds these three nucleotides in the order of C, C, and A to the tRNA nucleotide-73, using CTP and ATP as substrates and producing inorganic pyrophosphate. tRNA 3'-terminal CCA addition is required both for tRNA processing and repair. Also involved in tRNA surveillance by mediating tandem CCA addition to generate a CCACCA at the 3' terminus of unstable tRNAs. While stable tRNAs receive only 3'-terminal CCA, unstable tRNAs are marked with CCACCA and rapidly degraded. The sequence is that of CCA-adding enzyme from Listeria monocytogenes serotype 4b (strain F2365).